A 566-amino-acid polypeptide reads, in one-letter code: Autophagy-related protein 22-1 (566 aa).

A helical transmembrane segment spans residues 38-58; the sequence is YPIAAEVFAVVAVGAFLPVIL. Asn-103 carries an N-linked (GlcNAc...) asparagine glycan. 3 consecutive transmembrane segments (helical) span residues 110 to 130, 146 to 168, and 179 to 199; these read SFAMYTFSAAVIVQAVTLVCF, AFAYTGSVASALFIFISPTVYFL, and SLGCSFVLLNAFLPLLVANHA. A glycan (N-linked (GlcNAc...) asparagine) is linked at Asn-200. 8 helical membrane passes run 242–262, 278–298, 351–371, 382–402, 416–436, 451–471, 488–510, and 519–539; these read GYGYMAAVFVQVISILILWLF, VILLLVGMWWAALTTPTLLWL, FLISWFLLSDAVATISGTAVL, IAIALLSITSIGSGIIGAFAW, ILLCCVAGMEMIPLYGLLGFI, WEIYPVAVLHGIVMGGVSSYA, FALYAVTDKGSSAFGPALVGWLV, and AFIFLAVLVVLPAPLLWMLDV. The segment at 547–566 is disordered; that stretch reads KAMADGEGRGRGTYERVREE.

This sequence belongs to the ATG22 family.

It is found in the vacuole membrane. In terms of biological role, vacuolar effluxer which mediate the efflux of amino acids resulting from autophagic degradation. The release of autophagic amino acids allows the maintenance of protein synthesis and viability during nitrogen starvation. This Phaeosphaeria nodorum (strain SN15 / ATCC MYA-4574 / FGSC 10173) (Glume blotch fungus) protein is Autophagy-related protein 22-1 (ATG22-1).